The primary structure comprises 168 residues: 2-C-methyl-D-erythritol 2,4-cyclodiphosphate synthase (168 aa).

Aspartate 13 and histidine 15 together coordinate a divalent metal cation. 4-CDP-2-C-methyl-D-erythritol 2-phosphate is bound by residues 13-15 (DVH) and 39-40 (HS). A divalent metal cation is bound at residue histidine 47. 4-CDP-2-C-methyl-D-erythritol 2-phosphate contacts are provided by residues 61-63 (DIG), 66-70 (FPDTD), phenylalanine 144, and lysine 147.

Belongs to the IspF family. In terms of assembly, homotrimer. Requires a divalent metal cation as cofactor.

It catalyses the reaction 4-CDP-2-C-methyl-D-erythritol 2-phosphate = 2-C-methyl-D-erythritol 2,4-cyclic diphosphate + CMP. It functions in the pathway isoprenoid biosynthesis; isopentenyl diphosphate biosynthesis via DXP pathway; isopentenyl diphosphate from 1-deoxy-D-xylulose 5-phosphate: step 4/6. Involved in the biosynthesis of isopentenyl diphosphate (IPP) and dimethylallyl diphosphate (DMAPP), two major building blocks of isoprenoid compounds. Catalyzes the conversion of 4-diphosphocytidyl-2-C-methyl-D-erythritol 2-phosphate (CDP-ME2P) to 2-C-methyl-D-erythritol 2,4-cyclodiphosphate (ME-CPP) with a corresponding release of cytidine 5-monophosphate (CMP). This Ralstonia pickettii (strain 12J) protein is 2-C-methyl-D-erythritol 2,4-cyclodiphosphate synthase.